The primary structure comprises 130 residues: MKYIAIDLGLKRIGLAYSAHKDLVTPLKAVERKNRDQAARDVKKTLIEWEVDAVVVGIPLGGSSEDEMRRRVAHFMNLVAFEGEIFYQDESNSSIEAESMMRGEIKYIRDGRIDSISAMIILQRYLRQKC.

Belongs to the YqgF nuclease family.

It is found in the cytoplasm. In terms of biological role, could be a nuclease involved in processing of the 5'-end of pre-16S rRNA. This chain is Putative pre-16S rRNA nuclease, found in Sulfurimonas denitrificans (strain ATCC 33889 / DSM 1251) (Thiomicrospira denitrificans (strain ATCC 33889 / DSM 1251)).